The sequence spans 263 residues: Gap junction beta-6 protein (263 aa).

At 1–19 the chain is on the cytoplasmic side; it reads MDWGALQTILGGVNKHSTS. The helical transmembrane segment at 20-40 threads the bilayer; sequence IGKIWLTVLFIFRIMILVVAA. Topologically, residues 41–75 are extracellular; it reads ERVWGDEQDDFICNTLQPGCKNVCYDHFFPISHIR. A helical membrane pass occupies residues 76-96; the sequence is LWALQLIFVSTPALLVAMHVA. The Cytoplasmic segment spans residues 97-137; it reads YRRHEKKRQFRKGDQKCEYKDIEEIRTQRFRIEGTLWWTYT. Residues 138 to 158 traverse the membrane as a helical segment; sequence CSIFFRLVFEAVFMYAFYFMY. Over 159–189 the chain is Extracellular; it reads DGFRMPRLMKCSAWPCPNTVDCFVSRPTEKT. The helical transmembrane segment at 190 to 210 threads the bilayer; that stretch reads VFTIFMIAVSSICILLNVAEL. Over 211–263 the chain is Cytoplasmic; sequence CYLLTKFFLRRSRKAGNQKHHPNHENKEETKQNEMNELISDSCQNTVIGFTSS.

The protein belongs to the connexin family. Beta-type (group I) subfamily. A connexon is composed of a hexamer of connexins. In terms of tissue distribution, exclusively expressed in the cochlea of the inner ear, where it is found in cells of the tegmentum vasculosum, cuboidal cells, supporting cells and clear cells.

The protein localises to the cell membrane. Its subcellular location is the cell junction. The protein resides in the gap junction. One gap junction consists of a cluster of closely packed pairs of transmembrane channels, the connexons, through which materials of low MW diffuse from one cell to a neighboring cell. The protein is Gap junction beta-6 protein (GJB6) of Gallus gallus (Chicken).